The sequence spans 392 residues: Formate-dependent phosphoribosylglycinamide formyltransferase (392 aa).

N(1)-(5-phospho-beta-D-ribosyl)glycinamide-binding positions include 22–23 (EL) and Glu-82. ATP-binding positions include Arg-114, Lys-155, 160–165 (SSGKGQ), 195–198 (EGVV), and Glu-203. Residues 119–308 (RLAAEELGLP…EFALHVRAFL (190 aa)) enclose the ATP-grasp domain. Mg(2+) contacts are provided by Glu-267 and Glu-279. N(1)-(5-phospho-beta-D-ribosyl)glycinamide-binding positions include Asp-286, Lys-355, and 362–363 (RR).

It belongs to the PurK/PurT family. Homodimer.

The catalysed reaction is N(1)-(5-phospho-beta-D-ribosyl)glycinamide + formate + ATP = N(2)-formyl-N(1)-(5-phospho-beta-D-ribosyl)glycinamide + ADP + phosphate + H(+). Its pathway is purine metabolism; IMP biosynthesis via de novo pathway; N(2)-formyl-N(1)-(5-phospho-D-ribosyl)glycinamide from N(1)-(5-phospho-D-ribosyl)glycinamide (formate route): step 1/1. In terms of biological role, involved in the de novo purine biosynthesis. Catalyzes the transfer of formate to 5-phospho-ribosyl-glycinamide (GAR), producing 5-phospho-ribosyl-N-formylglycinamide (FGAR). Formate is provided by PurU via hydrolysis of 10-formyl-tetrahydrofolate. In Salmonella dublin (strain CT_02021853), this protein is Formate-dependent phosphoribosylglycinamide formyltransferase.